Consider the following 495-residue polypeptide: Probable biotin-dependent acyl-coenzyme A carboxylase beta3 subunit (495 aa).

One can recognise a CoA carboxyltransferase N-terminal domain in the interval 1-236 (MSRITTDQLR…PLPAPQTPAP (236 aa)). Residues 242-470 (TWDSVVASRR…SNAIAAEVHA (229 aa)) enclose the CoA carboxyltransferase C-terminal domain.

The protein belongs to the AccD/PCCB family. As to quaternary structure, the biotin-dependent acyl-CoA carboxylase complex is composed of an AccA protein, which contains the biotin carboxylase (BC) and biotin carboxyl carrier protein (BCCP) domains, and an AccD protein, which contains the carboxyl transferase (CT) domain.

Component of a biotin-dependent acyl-CoA carboxylase complex. This subunit transfers the CO2 from carboxybiotin to the CoA ester substrate. The chain is Probable biotin-dependent acyl-coenzyme A carboxylase beta3 subunit (accD3) from Mycobacterium bovis (strain ATCC BAA-935 / AF2122/97).